Here is a 526-residue protein sequence, read N- to C-terminus: Major facilitator superfamily domain-containing protein 4A (526 aa).

Helical transmembrane passes span 21 to 41, 55 to 75, 84 to 104, 107 to 127, 142 to 162, 215 to 235, 297 to 317, 341 to 361, 377 to 397, 401 to 421, 430 to 450, and 458 to 478; these read LTYW…GPTI, ITLV…IGGF, LSSL…IPLC, LLML…IDTI, VFLQ…PLIA, YAFW…FVLV, LSFF…DGIV, GYLT…AIPL, GVIV…FLFI, CLGL…EDIL, VLVT…GSVM, and FLLC…FLYF.

This sequence belongs to the major facilitator superfamily.

It is found in the membrane. This Danio rerio (Zebrafish) protein is Major facilitator superfamily domain-containing protein 4A (mfsd4a).